The chain runs to 400 residues: Acyl-CoA dehydrogenase FadE26 (400 aa).

Residues 127–130 (IGYS), Thr-136, and Ser-162 contribute to the FAD site. Glu-247 (proton acceptor) is an active-site residue. FAD is bound at residue 380–382 (TNE).

The protein belongs to the acyl-CoA dehydrogenase family. As to quaternary structure, heterotetramer (dimer of heterodimers) composed of FadE26 and FadE27. FAD is required as a cofactor.

The catalysed reaction is (25S)-3-oxocholest-4-en-26-oyl-CoA + A = 3-oxo-cholest-4,24-dien-26-oyl-CoA + AH2. Its pathway is steroid metabolism; cholesterol degradation. With respect to regulation, uncompetitively inhibited by high concentration of 3-OCS-CoA. Its function is as follows. Involved in the first cycle of side chain dehydrogenation in the beta-oxidation of cholesterol catabolism. It contributes partly to the virulence by increasing the efficiency of beta-oxidation. Catalyzes the dehydrogenation of acyl-CoA ester side chains of (25S)-3-oxo-cholest-4-en-26-oyl-CoA (3-OCS-CoA) to yield (24E)-3-oxo-cholest-4,24-dien-26-oyl-CoA. Also able to dehydrogenate steroyl-CoA such as 3-oxo-chol-4-en-24-oyl-CoA (3-OCO-CoA) as well as 3-oxo-4-pregnene-20-carboxyl-CoA (3-OPC-CoA). It dehydrogenates only (25S)-OCS-CoA diastereomer. This is Acyl-CoA dehydrogenase FadE26 (fadE26) from Mycobacterium tuberculosis (strain ATCC 25618 / H37Rv).